The following is a 315-amino-acid chain: Homeobox-leucine zipper protein HAT3 (315 aa).

The disordered stretch occupies residues 140–163 (SCSLGGGSDDEDGSGNGDDSSRKK). The segment at residues 159 to 218 (SSRKKLRLSKEQALVLEETFKEHSTLNPKQKMALAKQLNLRTRQVEVWFQNRRARTKLKQ) is a DNA-binding region (homeobox). The interval 226–247 (LKRCCENLTDENRRLQKEVSEL) is leucine-zipper. The span at 280-305 (SSSSVAPPVMNSSSPMGPMSPWAAMP) shows a compositional bias: low complexity. Positions 280 to 315 (SSSSVAPPVMNSSSPMGPMSPWAAMPLRQRPAAGSH) are disordered.

The protein belongs to the HD-ZIP homeobox family. Class II subfamily.

It localises to the nucleus. Probable transcription factor. The protein is Homeobox-leucine zipper protein HAT3 (HAT3) of Arabidopsis thaliana (Mouse-ear cress).